The following is a 470-amino-acid chain: 3-isopropylmalate dehydratase large subunit (470 aa).

3 residues coordinate [4Fe-4S] cluster: cysteine 351, cysteine 411, and cysteine 414.

It belongs to the aconitase/IPM isomerase family. LeuC type 1 subfamily. As to quaternary structure, heterodimer of LeuC and LeuD. [4Fe-4S] cluster is required as a cofactor.

The catalysed reaction is (2R,3S)-3-isopropylmalate = (2S)-2-isopropylmalate. Its pathway is amino-acid biosynthesis; L-leucine biosynthesis; L-leucine from 3-methyl-2-oxobutanoate: step 2/4. Catalyzes the isomerization between 2-isopropylmalate and 3-isopropylmalate, via the formation of 2-isopropylmaleate. This is 3-isopropylmalate dehydratase large subunit from Rhodopseudomonas palustris (strain BisA53).